We begin with the raw amino-acid sequence, 441 residues long: Ribulose bisphosphate carboxylase large chain (441 aa).

2 residues coordinate substrate: Asn89 and Thr139. The Proton acceptor role is filled by Lys141. Position 143 (Lys143) interacts with substrate. Mg(2+) is bound by residues Lys167, Asp169, and Glu170. Lys167 is modified (N6-carboxylysine). His260 serves as the catalytic Proton acceptor. Positions 261 and 345 each coordinate substrate.

This sequence belongs to the RuBisCO large chain family. Type I subfamily. In terms of assembly, heterohexadecamer of 8 large chains and 8 small chains; disulfide-linked. The disulfide link is formed within the large subunit homodimers. Mg(2+) is required as a cofactor. Post-translationally, the disulfide bond which can form in the large chain dimeric partners within the hexadecamer appears to be associated with oxidative stress and protein turnover.

The protein localises to the plastid. Its subcellular location is the chloroplast. It carries out the reaction 2 (2R)-3-phosphoglycerate + 2 H(+) = D-ribulose 1,5-bisphosphate + CO2 + H2O. The enzyme catalyses D-ribulose 1,5-bisphosphate + O2 = 2-phosphoglycolate + (2R)-3-phosphoglycerate + 2 H(+). In terms of biological role, ruBisCO catalyzes two reactions: the carboxylation of D-ribulose 1,5-bisphosphate, the primary event in carbon dioxide fixation, as well as the oxidative fragmentation of the pentose substrate in the photorespiration process. Both reactions occur simultaneously and in competition at the same active site. This chain is Ribulose bisphosphate carboxylase large chain, found in Asclepias exaltata (Poke milkweed).